The sequence spans 320 residues: Membrane protein insertase YidC 2 (320 aa).

An N-terminal signal peptide occupies residues 1 to 23 (MKNLKKKLTLTGLMTAGLLFLSG). Cys-24 is lipidated: N-palmitoyl cysteine. Cys-24 carries S-diacylglycerol cysteine lipidation. 5 helical membrane-spanning segments follow: residues 68–88 (YGWGIIFVTLIIRFLILPLGL), 142–162 (MLSSIGCLPMLIQWPFFIALY), 178–198 (GIPLGHPSVVLVIISGVLYFI), 217–237 (AMLIMSPAMIVVFSFMSPAGV), and 239–259 (LYWAVGGFVIVIQQIIITFIM). The disordered stretch occupies residues 270-320 (EFTKNPPKINNEGLKDVTPTSVQENFKEITSERNEKERKSGGRNAGKQNRK). The segment covering 294-309 (NFKEITSERNEKERKS) has biased composition (basic and acidic residues).

This sequence belongs to the OXA1/ALB3/YidC family. Type 2 subfamily.

It is found in the cell membrane. Functionally, required for the insertion and/or proper folding and/or complex formation of integral membrane proteins into the membrane. Involved in integration of membrane proteins that insert both dependently and independently of the Sec translocase complex, as well as at least some lipoproteins. The polypeptide is Membrane protein insertase YidC 2 (Lactococcus lactis subsp. lactis (strain IL1403) (Streptococcus lactis)).